The following is a 943-amino-acid chain: Protein translocase subunit SecA (943 aa).

ATP is bound by residues Gln-90, 108-112, and Asp-509; that span reads GEGKT. Positions 534-561 are disordered; that stretch reads KPDNEHKPPIPQQRNSKSGGGFSANVDS.

This sequence belongs to the SecA family. Monomer and homodimer. Part of the essential Sec protein translocation apparatus which comprises SecA, SecYEG and auxiliary proteins SecDF. Other proteins may also be involved.

It localises to the cell inner membrane. The protein localises to the cellular thylakoid membrane. Its subcellular location is the cytoplasm. It catalyses the reaction ATP + H2O + cellular proteinSide 1 = ADP + phosphate + cellular proteinSide 2.. Its function is as follows. Part of the Sec protein translocase complex. Interacts with the SecYEG preprotein conducting channel. Has a central role in coupling the hydrolysis of ATP to the transfer of proteins into and across the cell membrane, serving as an ATP-driven molecular motor driving the stepwise translocation of polypeptide chains across the membrane. In terms of biological role, probably participates in protein translocation into and across both the cytoplasmic and thylakoid membranes in cyanobacterial cells. The chain is Protein translocase subunit SecA from Prochlorococcus marinus subsp. pastoris (strain CCMP1986 / NIES-2087 / MED4).